The following is an 87-amino-acid chain: Sec-independent protein translocase protein TatA (87 aa).

Residues 1–21 (MGSFSIWHWLIVLLIVVMVFG) form a helical membrane-spanning segment. Residues 40–87 (KDGMKDGSTPEGTPASTTAATPPAGQVTNQQAHAADPGTIDVEAKHKG) are disordered. The segment covering 46-64 (GSTPEGTPASTTAATPPAG) has biased composition (low complexity).

Belongs to the TatA/E family. The Tat system comprises two distinct complexes: a TatABC complex, containing multiple copies of TatA, TatB and TatC subunits, and a separate TatA complex, containing only TatA subunits. Substrates initially bind to the TatABC complex, which probably triggers association of the separate TatA complex to form the active translocon.

Its subcellular location is the cell inner membrane. In terms of biological role, part of the twin-arginine translocation (Tat) system that transports large folded proteins containing a characteristic twin-arginine motif in their signal peptide across membranes. TatA could form the protein-conducting channel of the Tat system. This chain is Sec-independent protein translocase protein TatA, found in Paracidovorax citrulli (strain AAC00-1) (Acidovorax citrulli).